The following is a 111-amino-acid chain: Small ribosomal subunit protein uS17 (111 aa).

The protein belongs to the universal ribosomal protein uS17 family. Part of the 30S ribosomal subunit.

Its function is as follows. One of the primary rRNA binding proteins, it binds specifically to the 5'-end of 16S ribosomal RNA. In Methanocella arvoryzae (strain DSM 22066 / NBRC 105507 / MRE50), this protein is Small ribosomal subunit protein uS17.